A 295-amino-acid chain; its full sequence is 4-diphosphocytidyl-2-C-methyl-D-erythritol kinase (295 aa).

Lysine 22 is a catalytic residue. Position 106–116 (106–116) interacts with ATP; sequence PAGGGFGGGSS. The active site involves aspartate 148.

The protein belongs to the GHMP kinase family. IspE subfamily.

It catalyses the reaction 4-CDP-2-C-methyl-D-erythritol + ATP = 4-CDP-2-C-methyl-D-erythritol 2-phosphate + ADP + H(+). The protein operates within isoprenoid biosynthesis; isopentenyl diphosphate biosynthesis via DXP pathway; isopentenyl diphosphate from 1-deoxy-D-xylulose 5-phosphate: step 3/6. Functionally, catalyzes the phosphorylation of the position 2 hydroxy group of 4-diphosphocytidyl-2C-methyl-D-erythritol. This Xanthomonas axonopodis pv. citri (strain 306) protein is 4-diphosphocytidyl-2-C-methyl-D-erythritol kinase.